We begin with the raw amino-acid sequence, 179 residues long: Large ribosomal subunit protein uL5 (179 aa).

It belongs to the universal ribosomal protein uL5 family. Part of the 50S ribosomal subunit; part of the 5S rRNA/L5/L18/L25 subcomplex. Contacts the 5S rRNA and the P site tRNA. Forms a bridge to the 30S subunit in the 70S ribosome.

Its function is as follows. This is one of the proteins that bind and probably mediate the attachment of the 5S RNA into the large ribosomal subunit, where it forms part of the central protuberance. In the 70S ribosome it contacts protein S13 of the 30S subunit (bridge B1b), connecting the 2 subunits; this bridge is implicated in subunit movement. Contacts the P site tRNA; the 5S rRNA and some of its associated proteins might help stabilize positioning of ribosome-bound tRNAs. In Staphylococcus aureus (strain MW2), this protein is Large ribosomal subunit protein uL5.